We begin with the raw amino-acid sequence, 338 residues long: Lipoate-protein ligase A (338 aa).

One can recognise a BPL/LPL catalytic domain in the interval 29 to 216; it reads PATQRVLFLW…AFFAHYGERV (188 aa). Residues R71, 76–79, and K134 each bind ATP; that span reads GAVF. (R)-lipoate is bound at residue K134.

It belongs to the LplA family. In terms of assembly, monomer.

Its subcellular location is the cytoplasm. The catalysed reaction is L-lysyl-[lipoyl-carrier protein] + (R)-lipoate + ATP = N(6)-[(R)-lipoyl]-L-lysyl-[lipoyl-carrier protein] + AMP + diphosphate + H(+). It functions in the pathway protein modification; protein lipoylation via exogenous pathway; protein N(6)-(lipoyl)lysine from lipoate: step 1/2. Its pathway is protein modification; protein lipoylation via exogenous pathway; protein N(6)-(lipoyl)lysine from lipoate: step 2/2. Functionally, catalyzes both the ATP-dependent activation of exogenously supplied lipoate to lipoyl-AMP and the transfer of the activated lipoyl onto the lipoyl domains of lipoate-dependent enzymes. The sequence is that of Lipoate-protein ligase A from Shigella dysenteriae serotype 1 (strain Sd197).